Consider the following 447-residue polypeptide: Signal recognition particle 54 kDa protein (447 aa).

Residues 103-110 (GVQGSGKT), 185-189 (DTAGR), and 245-248 (TKMD) each bind GTP.

The protein belongs to the GTP-binding SRP family. SRP54 subfamily. In terms of assembly, part of the signal recognition particle protein translocation system, which is composed of SRP and FtsY. Archaeal SRP consists of a 7S RNA molecule of 300 nucleotides and two protein subunits: SRP54 and SRP19.

Its subcellular location is the cytoplasm. It catalyses the reaction GTP + H2O = GDP + phosphate + H(+). Its function is as follows. Involved in targeting and insertion of nascent membrane proteins into the cytoplasmic membrane. Binds to the hydrophobic signal sequence of the ribosome-nascent chain (RNC) as it emerges from the ribosomes. The SRP-RNC complex is then targeted to the cytoplasmic membrane where it interacts with the SRP receptor FtsY. This Saccharolobus islandicus (strain Y.G.57.14 / Yellowstone #1) (Sulfolobus islandicus) protein is Signal recognition particle 54 kDa protein.